The sequence spans 552 residues: Membrane protein insertase YidC (552 aa).

A helical transmembrane segment spans residues 3–23; it reads IKRTVLWVIFFMSAVMLFDNW. Residues 35–59 are disordered; the sequence is PSATPTKTVGSAAPGTTTPGTQPAD. The segment covering 42 to 59 has biased composition (low complexity); that stretch reads TVGSAAPGTTTPGTQPAD. Helical transmembrane passes span 364-384, 430-450, and 504-524; these read WGWSIVLLTLLIKAVFFPLSA, FGGCLPVVIQIPVFISLYWVL, and MMFMPIAFSVMFFFFPAGLVL.

Belongs to the OXA1/ALB3/YidC family. Type 1 subfamily. As to quaternary structure, interacts with the Sec translocase complex via SecD. Specifically interacts with transmembrane segments of nascent integral membrane proteins during membrane integration.

It localises to the cell inner membrane. In terms of biological role, required for the insertion and/or proper folding and/or complex formation of integral membrane proteins into the membrane. Involved in integration of membrane proteins that insert both dependently and independently of the Sec translocase complex, as well as at least some lipoproteins. Aids folding of multispanning membrane proteins. The protein is Membrane protein insertase YidC of Paraburkholderia phytofirmans (strain DSM 17436 / LMG 22146 / PsJN) (Burkholderia phytofirmans).